The sequence spans 240 residues: UDP-2,3-diacylglucosamine hydrolase (240 aa).

Asp9, His11, Asp43, Asn81, and His116 together coordinate Mn(2+). 81–82 is a binding site for substrate; sequence NR. Substrate-binding residues include Asp124, Ser162, Lys166, Lys169, and His197. 2 residues coordinate Mn(2+): His197 and His199.

The protein belongs to the LpxH family. Mn(2+) serves as cofactor.

The protein resides in the cell inner membrane. The enzyme catalyses UDP-2-N,3-O-bis[(3R)-3-hydroxytetradecanoyl]-alpha-D-glucosamine + H2O = 2-N,3-O-bis[(3R)-3-hydroxytetradecanoyl]-alpha-D-glucosaminyl 1-phosphate + UMP + 2 H(+). Its pathway is glycolipid biosynthesis; lipid IV(A) biosynthesis; lipid IV(A) from (3R)-3-hydroxytetradecanoyl-[acyl-carrier-protein] and UDP-N-acetyl-alpha-D-glucosamine: step 4/6. Hydrolyzes the pyrophosphate bond of UDP-2,3-diacylglucosamine to yield 2,3-diacylglucosamine 1-phosphate (lipid X) and UMP by catalyzing the attack of water at the alpha-P atom. Involved in the biosynthesis of lipid A, a phosphorylated glycolipid that anchors the lipopolysaccharide to the outer membrane of the cell. The protein is UDP-2,3-diacylglucosamine hydrolase of Neisseria meningitidis serogroup C / serotype 2a (strain ATCC 700532 / DSM 15464 / FAM18).